The sequence spans 932 residues: Myelin gene regulatory factor-like A (932 aa).

Composition is skewed to low complexity over residues 1–19 (MDGY…QQHQ) and 33–48 (QQQQ…QQQQ). Disordered stretches follow at residues 1 to 63 (MDGY…ISNG), 152 to 256 (VNSP…LSSS), 269 to 328 (TNTQ…NENP), 540 to 568 (VTPP…SNNM), 582 to 601 (TMNI…LSQL), 613 to 660 (TQNH…NNNN), and 680 to 726 (NINN…CHWN). A compositionally biased stretch (polar residues) spans 49 to 59 (PMNGSNNQLLG). Residues 127–154 (LDSSFLMLQQQLQDQQQQIAQFNSSVNS) adopt a coiled-coil conformation. Low complexity-rich tracts occupy residues 152-249 (VNSP…ANNT) and 277-294 (PRSI…TNSP). A DNA-binding region (NDT80) is located at residues 286-546 (PNLSPTNSPI…ATQVTPPGDL (261 aa)). The segment covering 311-328 (ENENSDPPSPMTQYNENP) has biased composition (polar residues). Composition is skewed to low complexity over residues 615–660 (NHNN…NNNN) and 680–721 (NINN…NNNN). The Peptidase S74 domain maps to 767–877 (SDLRIKYDLK…KQMDEMKLKL (111 aa)). A coiled-coil region spans residues 863-895 (TQELSKQMDEMKLKLITYESKLKNLKKKSKNQT). A helical membrane pass occupies residues 895-915 (TILLIIFMITFLLVALYMYKP).

It is found in the membrane. Its function is as follows. Transcription factor which acts as a key regulator of pstA (prestalk-A) cells differentiation. Essential for ecmA-specific gene expression. The sequence is that of Myelin gene regulatory factor-like A (mrfA) from Dictyostelium discoideum (Social amoeba).